We begin with the raw amino-acid sequence, 794 residues long: Solute carrier family 26 member 9 (794 aa).

Residues 1-70 (MNKVRPRYII…WLPKYNIKGN (70 aa)) lie on the Cytoplasmic side of the membrane. A helical membrane pass occupies residues 71-96 (LLNDALGGISAGTIQIPQGMAFALLA). Topologically, residues 97-100 (NLPP) are extracellular. The helical transmembrane segment at 101-109 (VNGLYSSFF) threads the bilayer. At 110–129 (PLVVYFFMGGIPQMVPGTFA) the chain is on the cytoplasmic side. The chain crosses the membrane as a helical span at residues 130–142 (VISIIVGNVCLKL). The Extracellular segment spans residues 143-160 (APESHFQNVTSNGTITNI). A helical membrane pass occupies residues 161 to 189 (EAMNTARMHISATLACLTAIIQIALSFVQ). Residues 190–199 (FGFVAIYLSE) lie on the Cytoplasmic side of the membrane. Residues 200–222 (SFIRGFMTAAGLQILISVLKYIF) traverse the membrane as a helical segment. Residues 223–235 (GVSIPPYSGVLAI) lie on the Extracellular side of the membrane. Residues 236-244 (IYTFIDICK) constitute an intramembrane region (helical). Residues 245–252 (ELPKTNVA) lie on the Extracellular side of the membrane. The chain crosses the membrane as a helical span at residues 253–273 (SLIFALISTVLLIIVKELNMK). Over 274-284 (FMHKIRFPIPM) the chain is Cytoplasmic. Residues 285–297 (EIIIVIVATAVSG) traverse the membrane as a helical segment. Topologically, residues 298 to 332 (SFKLPERYHMNVVGHIPLGFPSPTVPNVTQWDEMV) are extracellular. Residues 333-356 (GTAFSLAIVGYVINLAMGRTLGAK) form a helical membrane-spanning segment. The Cytoplasmic segment spans residues 357–363 (HGFDVDA). A helical transmembrane segment spans residues 364-377 (NQEMLALGSGNFFG). The Extracellular portion of the chain corresponds to 378-388 (SFFFIHVICCA). Residues 389-398 (LSVTLAVDGA) traverse the membrane as a helical segment. The Cytoplasmic segment spans residues 399-403 (GGKSQ). The helical transmembrane segment at 404-417 (IASFFVMMSVMVTI) threads the bilayer. Residues 418 to 429 (LALGTYLNPLPK) are Extracellular-facing. A helical membrane pass occupies residues 430–455 (SVLGALIAVNLKNSLKQLSDPFYLWK). Topologically, residues 456 to 459 (KSKL) are cytoplasmic. The chain crosses the membrane as a helical span at residues 460 to 474 (DCLVWLVSFFSTFIL). Topologically, residues 475 to 477 (GLP) are extracellular. A helical membrane pass occupies residues 478 to 496 (YGLAVGVAFSILVVIFNTQ). Residues 497-794 (FRNGSSLNQV…MFQTEIQTAL (298 aa)) lie on the Cytoplasmic side of the membrane. The region spanning 517-739 (VYSKVQPIDG…ITVHDAVLYA (223 aa)) is the STAS domain.

It belongs to the SLC26A/SulP transporter (TC 2.A.53) family. In terms of assembly, homodimer.

The protein localises to the cell membrane. It is found in the endomembrane system. The enzyme catalyses chloride(in) = chloride(out). It carries out the reaction hydrogencarbonate(in) + chloride(out) = hydrogencarbonate(out) + chloride(in). With respect to regulation, inhibited by ammonium and thiosulfate. Functionally, ion transporter that can act both as an ion channel and anion exchanger. Mainly acts as a chloride channel, which mediate uncoupled chloride anion transport in an alternate-access mechanism where a saturable binding site is alternately exposed to either one or the other side of the membrane. Also acts as a DIDS- and thiosulfate- sensitive anion exchanger the exchange of chloride for bicarbonate ions across the cell membrane. The protein is Solute carrier family 26 member 9 (slc26a9) of Xenopus tropicalis (Western clawed frog).